Reading from the N-terminus, the 375-residue chain is o-succinylbenzoate synthase (375 aa).

The active-site Proton donor is Lys166. Mg(2+) contacts are provided by Asp191, Glu216, and Asp241. The active-site Proton acceptor is Lys265.

Belongs to the mandelate racemase/muconate lactonizing enzyme family. MenC type 2 subfamily. As to quaternary structure, homotetramer. It depends on a divalent metal cation as a cofactor.

The enzyme catalyses (1R,6R)-6-hydroxy-2-succinyl-cyclohexa-2,4-diene-1-carboxylate = 2-succinylbenzoate + H2O. It catalyses the reaction N-acetyl-D-methionine = N-acetyl-L-methionine. It carries out the reaction N-acetyl-D-phenylalanine = N-acetyl-L-phenylalanine. Its pathway is quinol/quinone metabolism; 1,4-dihydroxy-2-naphthoate biosynthesis; 1,4-dihydroxy-2-naphthoate from chorismate: step 4/7. The protein operates within quinol/quinone metabolism; menaquinone biosynthesis. Functionally, converts 2-succinyl-6-hydroxy-2,4-cyclohexadiene-1-carboxylate (SHCHC) to 2-succinylbenzoate (OSB). Also acts as a N-succinylamino acid racemase (NSAR) that catalyzes the racemization of various N-succinylamino acids, including N-succinyl-alanine and N-succinyl-phenylalanine. Can catalyze the racemization of a broad range of N-acylamino acids, including N-acetyl-methionine, N-acetyl-phenylalanine, N-carbamoyl-methionine, N-formyl-D-methionine, N-formyl-D-norleucine and N-carbamoyl-D-norleucine. May be a bifunctional enzyme involved in menaquinone biosynthesis and in an irreversible pathway for the conversion of D- to L-amino acids, thereby facilitating the survival and/or growth of the organism. This is o-succinylbenzoate synthase from Geobacillus kaustophilus.